Reading from the N-terminus, the 874-residue chain is MKAAEIREKFLKFFESKGHTIVRSSSLVPGNDPTLLFTNSGMVQFKDVFLGAETRPYSRATTAQRSVRAGGKHNDLENVGYTARHHTFFEMLGNFSFGDYFKRDAIHYAWELLTSVYKLPADKLWVTVYHDDDEAYDIWAKEVGVPAERIIRIGDNKGARYASDNFWQMGDTGPCGPCSEIFYDHGPDVWGGPPGSPEEDGDRYIEIWNLVFMQFNRDAQGNMTRLPKPCVDTGMGLERIAAVLQHVHSNYEIDLFQQLIKASARETGVADLANNSLKVIADHIRACSFLIVDGVIPGNEGRGYVLRRIVRRAIRHGYKLGRKAPFFHKLVADLVAEMGAAYPELKEAEPRVTDVLRQEEERFFETIEHGMSILEAALAELDAAGGKTLDGELAFKLHDTYGFPLDLTADVCRERGVTVDEPAFDDAMARQREQARAAGKFKATQGLEYTGAKTTFHGYEEIAFDDAKVVALYVEGASVGEVKAGESAVVVLDHTPFYAESGGQVGDQGVLANAATRFAVGDTLKVQADVIGHHGELEQGTLKVGDVVRAEIDAARRARTARNHSATHLMHKALRDVLGSHVQQKGSLVDADKTRFDFAHNAPLTDDEIRRVEAIVNEQVLANAPGIVRVMPYDDAVKGGAMALFGEKYGDEVRVLDLGFSRELCGGTHVHRTGDIGLFKIVAEGGVAAGIRRVEAITGDNAVRYVQALDARVNAAAAALKAQPSELLQRIGQVQDQVKSLEKELGALKSKLASSQGDELAQQAVEVGGVHVLAATLDGADAKTLRETVDKLKDKLKSAAIVLAAVDGGKVSLIAGVTADASKKVKAGELVNFVAQQVGGKGGGRPDMAQAGGTEPAKLPAALAGVKGWVEARL.

Zn(2+) contacts are provided by His564, His568, Cys665, and His669.

It belongs to the class-II aminoacyl-tRNA synthetase family. The cofactor is Zn(2+).

The protein resides in the cytoplasm. The enzyme catalyses tRNA(Ala) + L-alanine + ATP = L-alanyl-tRNA(Ala) + AMP + diphosphate. In terms of biological role, catalyzes the attachment of alanine to tRNA(Ala) in a two-step reaction: alanine is first activated by ATP to form Ala-AMP and then transferred to the acceptor end of tRNA(Ala). Also edits incorrectly charged Ser-tRNA(Ala) and Gly-tRNA(Ala) via its editing domain. This chain is Alanine--tRNA ligase, found in Burkholderia pseudomallei (strain 1106a).